We begin with the raw amino-acid sequence, 260 residues long: Spectinomycin 9-adenylyltransferase (260 aa).

It carries out the reaction spectinomycin + ATP = 9-O-adenylylspectinomycin + diphosphate. Its function is as follows. Mediates bacterial resistance to the antibiotic spectinomycin but not streptomycin. The polypeptide is Spectinomycin 9-adenylyltransferase (ant1) (Staphylococcus aureus (strain Mu50 / ATCC 700699)).